A 313-amino-acid polypeptide reads, in one-letter code: Ribosomal RNA small subunit methyltransferase H (313 aa).

S-adenosyl-L-methionine is bound by residues 35 to 37 (GGH), Asp-55, Phe-79, Asp-101, and Gln-108.

Belongs to the methyltransferase superfamily. RsmH family.

The protein localises to the cytoplasm. The enzyme catalyses cytidine(1402) in 16S rRNA + S-adenosyl-L-methionine = N(4)-methylcytidine(1402) in 16S rRNA + S-adenosyl-L-homocysteine + H(+). Specifically methylates the N4 position of cytidine in position 1402 (C1402) of 16S rRNA. This Shigella dysenteriae serotype 1 (strain Sd197) protein is Ribosomal RNA small subunit methyltransferase H.